Consider the following 362-residue polypeptide: RING-H2 finger protein ATL52 (362 aa).

Residues 58–78 form a helical membrane-spanning segment; sequence LIALIGILTSALILVSYYTLI. Residues 142–184 form an RING-type; atypical zinc finger; it reads CSVCLSEFEENESLRLLPKCNHAFHLPCIDTWLKSHSNCPLCR. Disordered regions lie at residues 252 to 271 and 296 to 333; these read DARS…DEDS and EDEE…RSGG. A compositionally biased stretch (basic and acidic residues) spans 309–319; the sequence is QRREEGEDGDG.

The protein belongs to the RING-type zinc finger family. ATL subfamily. Expressed in flowers.

The protein resides in the membrane. The catalysed reaction is S-ubiquitinyl-[E2 ubiquitin-conjugating enzyme]-L-cysteine + [acceptor protein]-L-lysine = [E2 ubiquitin-conjugating enzyme]-L-cysteine + N(6)-ubiquitinyl-[acceptor protein]-L-lysine.. It participates in protein modification; protein ubiquitination. The chain is RING-H2 finger protein ATL52 (ATL52) from Arabidopsis thaliana (Mouse-ear cress).